The following is a 212-amino-acid chain: Ribonuclease HII (212 aa).

The 199-residue stretch at 1 to 199 (MIGGIDEAGR…VGGRIGLGRN (199 aa)) folds into the RNase H type-2 domain. The a divalent metal cation site is built by Asp-6, Glu-7, and Asp-101.

It belongs to the RNase HII family. Mn(2+) serves as cofactor. The cofactor is Mg(2+).

It localises to the cytoplasm. It carries out the reaction Endonucleolytic cleavage to 5'-phosphomonoester.. Functionally, endonuclease that specifically degrades the RNA of RNA-DNA hybrids. The protein is Ribonuclease HII of Pyrobaculum aerophilum (strain ATCC 51768 / DSM 7523 / JCM 9630 / CIP 104966 / NBRC 100827 / IM2).